The following is a 690-amino-acid chain: Calpain-9 (690 aa).

Positions 1-24 (MPYLHRSLRPQPQPVPRDARTVHS) are disordered. A Calpain catalytic domain is found at 42-337 (LFEDADFPAS…FDKVEICNLT (296 aa)). Positions 81, 83, and 88 each coordinate Ca(2+). Cys-97 is a catalytic residue. Position 167 (Glu-167) interacts with Ca(2+). Residues His-254 and Asn-278 contribute to the active site. The Ca(2+) site is built by Glu-284, Asp-291, Leu-312, Asp-314, and Glu-316. A domain III region spans residues 338-521 (PDALEDNTLH…PQEEETEEER (184 aa)). Residues 522-690 (QFRALFRRIA…NEFINLTMNI (169 aa)) are domain IV. 3 EF-hand domains span residues 534-552 (DMEV…VLQK), 561-589 (LSLL…FRVF), and 591-626 (DKLR…AGFQ). Ca(2+) is bound by residues Asp-574, Ser-576, Asn-578, Lys-580, Glu-585, Asp-604, Asp-606, Ser-608, Thr-610, and Glu-615.

It belongs to the peptidase C2 family. Predominantly expressed in stomach and small intestine, although low levels of expression in other organs.

In terms of biological role, calcium-regulated non-lysosomal thiol-protease. The protein is Calpain-9 (Capn9) of Rattus norvegicus (Rat).